Here is a 336-residue protein sequence, read N- to C-terminus: Lipoyl synthase (336 aa).

[4Fe-4S] cluster is bound by residues Cys-81, Cys-86, Cys-92, Cys-107, Cys-111, Cys-114, and Ser-323. One can recognise a Radical SAM core domain in the interval 93 to 312 (FGHGTATFMI…EDYGYELGFS (220 aa)).

The protein belongs to the radical SAM superfamily. Lipoyl synthase family. The cofactor is [4Fe-4S] cluster.

It is found in the cytoplasm. It carries out the reaction [[Fe-S] cluster scaffold protein carrying a second [4Fe-4S](2+) cluster] + N(6)-octanoyl-L-lysyl-[protein] + 2 oxidized [2Fe-2S]-[ferredoxin] + 2 S-adenosyl-L-methionine + 4 H(+) = [[Fe-S] cluster scaffold protein] + N(6)-[(R)-dihydrolipoyl]-L-lysyl-[protein] + 4 Fe(3+) + 2 hydrogen sulfide + 2 5'-deoxyadenosine + 2 L-methionine + 2 reduced [2Fe-2S]-[ferredoxin]. The protein operates within protein modification; protein lipoylation via endogenous pathway; protein N(6)-(lipoyl)lysine from octanoyl-[acyl-carrier-protein]: step 2/2. In terms of biological role, catalyzes the radical-mediated insertion of two sulfur atoms into the C-6 and C-8 positions of the octanoyl moiety bound to the lipoyl domains of lipoate-dependent enzymes, thereby converting the octanoylated domains into lipoylated derivatives. This is Lipoyl synthase from Stenotrophomonas maltophilia (strain R551-3).